Here is a 518-residue protein sequence, read N- to C-terminus: Arrestin-related trafficking adapter 10 (518 aa).

K118 participates in a covalent cross-link: Glycyl lysine isopeptide (Lys-Gly) (interchain with G-Cter in ubiquitin).

The protein belongs to the ART10 family. As to quaternary structure, interacts with RSP5. In terms of processing, ubiquitinated by RSP5.

Its subcellular location is the cytoplasm. Functionally, may regulate endocytosis by recruiting RSP5 ubiquitin ligase activity to specific plasma membrane proteins in response to extracellular stimuli. The protein is Arrestin-related trafficking adapter 10 (ART10) of Saccharomyces cerevisiae (strain ATCC 204508 / S288c) (Baker's yeast).